The sequence spans 352 residues: MSEPQSWSVMASQMTSAQLIRVYLDGSMGIGKTSMLNEIPTHSLMGVPVLKVFEPMKYWRYYFTDLVTTVNDTCDRRRRGEFSLFQSSMIVTALQSKFADPYLVFHERLSSKCHRITGTRGNPSLILILDRHPISATVCFPIARHLTGDCSLEMLISMIIRLPQEPPGCNLVIVDLHDEKEHVSRLSSRNRTGEKTDLLMLRALNAVYSCLVDTIMYANHICPYSKDEWESEWLDLPWFDTSLATTFINEPRTDYRGSRVSLHHTLLAIFKRRELCAEDGSLSTTHAWILWGLLMKLRNINVERFNITGLSTTKCVESFMDTMSERLVTHSSWNDAFEIEADVLAYNKEMAM.

26-33 (GSMGIGKT) contacts ATP. Catalysis depends on E54, which acts as the Proton acceptor. Q95 contributes to the substrate binding site. Position 185 (R185) interacts with ATP. A substrate-binding site is contributed by R191.

It belongs to the herpesviridae thymidine kinase family. As to quaternary structure, homodimer.

It carries out the reaction thymidine + ATP = dTMP + ADP + H(+). Catalyzes the transfer of the gamma-phospho group of ATP to thymidine to generate dTMP in the salvage pathway of pyrimidine synthesis. The dTMP serves as a substrate for DNA polymerase during viral DNA replication. Allows the virus to be reactivated and to grow in non-proliferative cells lacking a high concentration of phosphorylated nucleic acid precursors. The polypeptide is Thymidine kinase (Gallus gallus (Chicken)).